A 229-amino-acid polypeptide reads, in one-letter code: MAKKGKKYQDALKQIDANKVYTAEEAVELAKKIDFAKFDATVEVAFRLGVDPKKADQQIRGAVVLPNGTGKTQRVLVFAKGEKAKEAEAAGADYVGESEFVEKINQGWFDFDVIVATPDMMGEVGKLGRVLGPKGLMPNPKTGTVTMDVTKAVNEIKAGKVEYRVDKAGNVHAAIGKVSFDAAKLVENFRTVNDVLQKAKPAAAKGTYVKNLSVTTTFGPGIKVDPASL.

This sequence belongs to the universal ribosomal protein uL1 family. As to quaternary structure, part of the 50S ribosomal subunit.

Binds directly to 23S rRNA. The L1 stalk is quite mobile in the ribosome, and is involved in E site tRNA release. Functionally, protein L1 is also a translational repressor protein, it controls the translation of the L11 operon by binding to its mRNA. The chain is Large ribosomal subunit protein uL1 from Listeria monocytogenes serovar 1/2a (strain ATCC BAA-679 / EGD-e).